Reading from the N-terminus, the 265-residue chain is MEMO1 family protein Mbar_A1422 (265 aa).

It belongs to the MEMO1 family.

This chain is MEMO1 family protein Mbar_A1422, found in Methanosarcina barkeri (strain Fusaro / DSM 804).